Here is an 85-residue protein sequence, read N- to C-terminus: MKVTLIAILTCAAVLVLHTTAAEELEAESQLMEVGMPDTELAAVDEERLFECSVSCEIEKEGNKDCKEKKCKGGWKCKFNMCVKV.

The signal sequence occupies residues 1–22; it reads MKVTLIAILTCAAVLVLHTTAA. Positions 23–48 are excised as a propeptide; sequence EELEAESQLMEVGMPDTELAAVDEER. Intrachain disulfides connect Cys-52–Cys-66, Cys-56–Cys-77, and Cys-71–Cys-82.

Belongs to the neurotoxin 12 (Hwtx-2) family. 02 (Hwtx-2) subfamily. In terms of tissue distribution, expressed by the venom gland.

It localises to the secreted. Postsynaptic neurotoxin. The sequence is that of U4-theraphotoxin-Hhn1i from Cyriopagopus hainanus (Chinese bird spider).